The following is a 338-amino-acid chain: Ketol-acid reductoisomerase (NADP(+)) (338 aa).

One can recognise a KARI N-terminal Rossmann domain in the interval Met-1–Thr-181. Residues Tyr-24 to Gln-27, Arg-47, Ser-50, Ser-52, and Asp-82 to Gln-85 contribute to the NADP(+) site. The active site involves His-107. An NADP(+)-binding site is contributed by Gly-133. The KARI C-terminal knotted domain maps to Ser-182–Ile-327. Residues Asp-190, Glu-194, Glu-226, and Glu-230 each coordinate Mg(2+). Substrate is bound at residue Ser-251.

The protein belongs to the ketol-acid reductoisomerase family. It depends on Mg(2+) as a cofactor.

It carries out the reaction (2R)-2,3-dihydroxy-3-methylbutanoate + NADP(+) = (2S)-2-acetolactate + NADPH + H(+). The enzyme catalyses (2R,3R)-2,3-dihydroxy-3-methylpentanoate + NADP(+) = (S)-2-ethyl-2-hydroxy-3-oxobutanoate + NADPH + H(+). Its pathway is amino-acid biosynthesis; L-isoleucine biosynthesis; L-isoleucine from 2-oxobutanoate: step 2/4. The protein operates within amino-acid biosynthesis; L-valine biosynthesis; L-valine from pyruvate: step 2/4. Involved in the biosynthesis of branched-chain amino acids (BCAA). Catalyzes an alkyl-migration followed by a ketol-acid reduction of (S)-2-acetolactate (S2AL) to yield (R)-2,3-dihydroxy-isovalerate. In the isomerase reaction, S2AL is rearranged via a Mg-dependent methyl migration to produce 3-hydroxy-3-methyl-2-ketobutyrate (HMKB). In the reductase reaction, this 2-ketoacid undergoes a metal-dependent reduction by NADPH to yield (R)-2,3-dihydroxy-isovalerate. The sequence is that of Ketol-acid reductoisomerase (NADP(+)) from Thioalkalivibrio sulfidiphilus (strain HL-EbGR7).